Consider the following 117-residue polypeptide: DNA-directed RNA polymerase subunit omega (117 aa).

The protein belongs to the RNA polymerase subunit omega family. In terms of assembly, the RNAP catalytic core consists of 2 alpha, 1 beta, 1 beta' and 1 omega subunit. When a sigma factor is associated with the core the holoenzyme is formed, which can initiate transcription.

The enzyme catalyses RNA(n) + a ribonucleoside 5'-triphosphate = RNA(n+1) + diphosphate. In terms of biological role, promotes RNA polymerase assembly. Latches the N- and C-terminal regions of the beta' subunit thereby facilitating its interaction with the beta and alpha subunits. This is DNA-directed RNA polymerase subunit omega from Jannaschia sp. (strain CCS1).